A 698-amino-acid chain; its full sequence is Long-chain-fatty-acid--CoA ligase 1 (698 aa).

An N-acetylmethionine modification is found at M1. Residue Y9 is modified to 3'-nitrotyrosine. A helical; Signal-anchor for type III membrane protein membrane pass occupies residues 25-45; sequence LPTNTLMGFGAFAALTTFWYA. Residues 46 to 698 lie on the Cytoplasmic side of the membrane; the sequence is TRPKPLKPPC…IDDLYSTIKV (653 aa). Y84 bears the Phosphotyrosine mark. O-linked (GlcNAc) serine glycosylation occurs at S135. K207, K356, and K386 each carry N6-acetyllysine. S620 carries the post-translational modification Phosphoserine. K632 is modified (N6-acetyllysine).

It belongs to the ATP-dependent AMP-binding enzyme family. Mg(2+) is required as a cofactor. As to expression, highly expressed in liver, heart, skeletal muscle, kidney and erythroid cells, and to a lesser extent in brain, lung, placenta and pancreas.

It localises to the mitochondrion outer membrane. Its subcellular location is the peroxisome membrane. The protein resides in the microsome membrane. It is found in the endoplasmic reticulum membrane. It catalyses the reaction a long-chain fatty acid + ATP + CoA = a long-chain fatty acyl-CoA + AMP + diphosphate. The enzyme catalyses (5Z,8Z,11Z,14Z)-eicosatetraenoate + ATP + CoA = (5Z,8Z,11Z,14Z)-eicosatetraenoyl-CoA + AMP + diphosphate. The catalysed reaction is 3,7,11,15-tetramethylhexadecanoate + ATP + CoA = phytanoyl-CoA + AMP + diphosphate. It carries out the reaction hexadecanoate + ATP + CoA = hexadecanoyl-CoA + AMP + diphosphate. It catalyses the reaction (E)-hexadec-2-enoate + ATP + CoA = (2E)-hexadecenoyl-CoA + AMP + diphosphate. The enzyme catalyses 2,6,10,14-tetramethylpentadecanoate + ATP + CoA = pristanoyl-CoA + AMP + diphosphate. The catalysed reaction is 14,15-epoxy-(5Z,8Z,11Z)-eicosatrienoate + ATP + CoA = 14,15-epoxy-(5Z,8Z,11Z)-eicosatrienoyl-CoA + AMP + diphosphate. It carries out the reaction 5-hydroxy-(6E,8Z,11Z,14Z)-eicosatetraenoate + ATP + CoA = 5-hydroxy-(6E,8Z,11Z,14Z)-eicosatetraenoyl-CoA + AMP + diphosphate. It catalyses the reaction 12-hydroxy-(5Z,8Z,10E,14Z)-eicosatetraenoate + ATP + CoA = 12-hydroxy-(5Z,8Z,10E,14Z)-eicosatetraenoyl-CoA + AMP + diphosphate. The enzyme catalyses 15-hydroxy-(5Z,8Z,11Z,13E)-eicosatetraenoate + ATP + CoA = 15-hydroxy-(5Z,8Z,11Z,13E)-eicosatetraenoyl-CoA + AMP + diphosphate. The catalysed reaction is (9Z)-octadecenoate + ATP + CoA = (9Z)-octadecenoyl-CoA + AMP + diphosphate. Inhibited at high temperature and by arachidonate. Its function is as follows. Catalyzes the conversion of long-chain fatty acids to their active form acyl-CoAs for both synthesis of cellular lipids, and degradation via beta-oxidation. Preferentially uses palmitoleate, oleate and linoleate. Preferentially activates arachidonate than epoxyeicosatrienoic acids (EETs) or hydroxyeicosatrienoic acids (HETEs). In Homo sapiens (Human), this protein is Long-chain-fatty-acid--CoA ligase 1.